The chain runs to 156 residues: Arginine repressor (156 aa).

Belongs to the ArgR family.

The protein resides in the cytoplasm. It functions in the pathway amino-acid biosynthesis; L-arginine biosynthesis [regulation]. Functionally, regulates arginine biosynthesis genes. In Shewanella oneidensis (strain ATCC 700550 / JCM 31522 / CIP 106686 / LMG 19005 / NCIMB 14063 / MR-1), this protein is Arginine repressor.